The primary structure comprises 2210 residues: Mediator of RNA polymerase II transcription subunit 13-like (2210 aa).

Residues 391–400 (SKRSQMSTPT) show a composition bias toward polar residues. Disordered regions lie at residues 391-414 (SKRS…TWDF), 435-489 (AVGP…PFHH), and 519-582 (VSSS…NPAL). A compositionally biased stretch (low complexity) spans 445 to 458 (SQPGFSAGPSSSSS). Over residues 468-480 (KTAERQEKGDKLQ) the composition is skewed to basic and acidic residues. The segment covering 533–544 (SRNTSKQMNLNP) has biased composition (polar residues). Pro residues predominate over residues 551–560 (PISPLPPTLS). 2 positions are modified to phosphoserine: serine 553 and serine 560. The LXXLL motif 1 signature appears at 669-673 (LQRLL). Positions 736-752 (GTEKDSLKKNKSEDGFG) are enriched in basic and acidic residues. The interval 736 to 770 (GTEKDSLKKNKSEDGFGTKDVTTPGHSTPVPDGKN) is disordered. 3 positions are modified to phosphoserine: serine 817, serine 826, and serine 923. Positions 1016–1096 (PQMNTPVTLN…STTRPLNSVE (81 aa)) are disordered. Residues 1025 to 1036 (NSAAPASNSGAG) show a composition bias toward low complexity. The span at 1077 to 1092 (TDQGSPASTPSTTRPL) shows a compositional bias: polar residues. The LXXLL motif 2 signature appears at 1225 to 1229 (LLLLL). The interval 1380 to 1401 (LPIPTLLVGYDKDFLTISPFSL) is leucine-zipper. 2 disordered regions span residues 1530-1656 (QTPP…VTER) and 2045-2080 (GNLH…QGER). The span at 1531 to 1608 (TPPAAAQGQA…ISTTSSSGFS (78 aa)) shows a compositional bias: low complexity. Residues 1615–1629 (NPSTGGISADRTQGN) show a composition bias toward polar residues. Residues 1637-1650 (DPGQSSSQPSQDGQ) are compositionally biased toward low complexity. Serine 2083 bears the Phosphoserine mark.

This sequence belongs to the Mediator complex subunit 13 family. Component of the Mediator complex, which is composed of MED1, MED4, MED6, MED7, MED8, MED9, MED10, MED11, MED12, MED13, MED13L, MED14, MED15, MED16, MED17, MED18, MED19, MED20, MED21, MED22, MED23, MED24, MED25, MED26, MED27, MED29, MED30, MED31, CCNC, CDK8 and CDC2L6/CDK11. The MED12, MED13, CCNC and CDK8 subunits form a distinct module termed the CDK8 module. Mediator containing the CDK8 module is less active than Mediator lacking this module in supporting transcriptional activation. Individual preparations of the Mediator complex lacking one or more distinct subunits have been variously termed ARC, CRSP, DRIP, PC2, SMCC and TRAP. As to expression, highly expressed in brain (cerebellum), heart (aorta), skeletal muscle, kidney, placenta and peripheral blood leukocytes. Highly expressed in fetal brain.

It is found in the nucleus. Functionally, component of the Mediator complex, a coactivator involved in the regulated transcription of nearly all RNA polymerase II-dependent genes. Mediator functions as a bridge to convey information from gene-specific regulatory proteins to the basal RNA polymerase II transcription machinery. Mediator is recruited to promoters by direct interactions with regulatory proteins and serves as a scaffold for the assembly of a functional preinitiation complex with RNA polymerase II and the general transcription factors. This subunit may specifically regulate transcription of targets of the Wnt signaling pathway and SHH signaling pathway. This is Mediator of RNA polymerase II transcription subunit 13-like (MED13L) from Homo sapiens (Human).